The primary structure comprises 321 residues: Probable protein phosphatase 2C 44 (321 aa).

Disordered regions lie at residues 1 to 36 (MVGR…GGKK) and 51 to 70 (NSSS…NKVT). Positions 9–31 (SASSSASCSPSSSAAGTSSSSSA) are enriched in low complexity. A compositionally biased stretch (polar residues) spans 51–69 (NSSSTDTGKGRSKQSSNKV). The 250-residue stretch at 70-319 (THGFHLVEGK…DDISCIVIRF (250 aa)) folds into the PPM-type phosphatase domain. Positions 107, 108, 271, and 310 each coordinate Mn(2+).

It belongs to the PP2C family. The cofactor is Mg(2+). Mn(2+) is required as a cofactor.

It catalyses the reaction O-phospho-L-seryl-[protein] + H2O = L-seryl-[protein] + phosphate. It carries out the reaction O-phospho-L-threonyl-[protein] + H2O = L-threonyl-[protein] + phosphate. This Oryza sativa subsp. japonica (Rice) protein is Probable protein phosphatase 2C 44.